The primary structure comprises 132 residues: Mediator of RNA polymerase II transcription subunit 11 (132 aa).

The protein belongs to the Mediator complex subunit 11 family. As to quaternary structure, component of the Mediator complex.

It is found in the nucleus. In terms of biological role, component of the Mediator complex, a coactivator involved in the regulated transcription of nearly all RNA polymerase II-dependent genes. Mediator functions as a bridge to convey information from gene-specific regulatory proteins to the basal RNA polymerase II transcription machinery. Mediator is recruited to promoters by direct interactions with regulatory proteins and serves as a scaffold for theQ9P086 assembly of a functional pre-initiation complex with RNA polymerase II and the general transcription factors. The sequence is that of Mediator of RNA polymerase II transcription subunit 11 (MED11) from Aedes aegypti (Yellowfever mosquito).